The sequence spans 231 residues: Ion-translocating oxidoreductase complex subunit E (231 aa).

7 helical membrane passes run 18–38, 39–59, 69–89, 93–113, 127–147, 157–177, and 182–202; these read GLVQLLGLCPLLAVTATITNA, LGLGVATLLVLIGSNVLVSLV, IPVFVMIIAALVTCVQLLINA, NLYLSLGIFLPLIVTNCVIIG, SAFDGLMMGLGFTAVLVVLGA, LFGGADLLLGDWASVLTIHVW, and PFLLAMLPPGAFIGMGLLIAL.

It belongs to the NqrDE/RnfAE family. In terms of assembly, the complex is composed of six subunits: RnfA, RnfB, RnfC, RnfD, RnfE and RnfG.

It is found in the cell inner membrane. Part of a membrane-bound complex that couples electron transfer with translocation of ions across the membrane. This is Ion-translocating oxidoreductase complex subunit E from Shewanella frigidimarina (strain NCIMB 400).